The sequence spans 211 residues: Soluble inorganic pyrophosphatase PPA1 (211 aa).

Positions 61 and 75 each coordinate substrate. Tyr83 (proton donor) is an active-site residue. Position 87 (Tyr87) interacts with substrate. Mg(2+) is bound by residues Asp97, Asp102, and Asp134. Substrate is bound at residue Tyr171.

This sequence belongs to the PPase family. It depends on Mg(2+) as a cofactor.

It is found in the cytoplasm. It carries out the reaction diphosphate + H2O = 2 phosphate + H(+). Strongly inhibited by Ca(2+). Functionally, catalyzes the irreversible hydrolysis of pyrophosphate (PPi) to phosphate. This is Soluble inorganic pyrophosphatase PPA1 from Solanum tuberosum (Potato).